The chain runs to 205 residues: Small ribosomal subunit protein mS26 (205 aa).

The transit peptide at 1-26 directs the protein to the mitochondrion; it reads MLRALSTLGARPLGRPPAQFLLLARG.

This sequence belongs to the mitochondrion-specific ribosomal protein mS26 family. As to quaternary structure, component of the mitochondrial ribosome small subunit (28S) which comprises a 12S rRNA and about 30 distinct proteins.

The protein localises to the mitochondrion. In Bos taurus (Bovine), this protein is Small ribosomal subunit protein mS26 (MRPS26).